A 422-amino-acid chain; its full sequence is Glucose-1-phosphate adenylyltransferase 2 (422 aa).

Residues Tyr-110, Gly-175, 190–191 (EK), and Ser-208 contribute to the alpha-D-glucose 1-phosphate site.

The protein belongs to the bacterial/plant glucose-1-phosphate adenylyltransferase family. In terms of assembly, homotetramer.

It carries out the reaction alpha-D-glucose 1-phosphate + ATP + H(+) = ADP-alpha-D-glucose + diphosphate. The protein operates within glycan biosynthesis; glycogen biosynthesis. Functionally, involved in the biosynthesis of ADP-glucose, a building block required for the elongation reactions to produce glycogen. Catalyzes the reaction between ATP and alpha-D-glucose 1-phosphate (G1P) to produce pyrophosphate and ADP-Glc. The chain is Glucose-1-phosphate adenylyltransferase 2 from Alkalilimnicola ehrlichii (strain ATCC BAA-1101 / DSM 17681 / MLHE-1).